A 182-amino-acid polypeptide reads, in one-letter code: Probable peptidyl-prolyl cis-trans isomerase A (182 aa).

The region spanning 13–181 is the PPIase cyclophilin-type domain; sequence QNATATLHTN…EPVVIDSITI (169 aa). The segment at 161–182 is disordered; that stretch reads TTATDGNDRPTEPVVIDSITIS.

This sequence belongs to the cyclophilin-type PPIase family.

The protein localises to the cytoplasm. It carries out the reaction [protein]-peptidylproline (omega=180) = [protein]-peptidylproline (omega=0). In terms of biological role, PPIases accelerate the folding of proteins. It catalyzes the cis-trans isomerization of proline imidic peptide bonds in oligopeptides. This Mycobacterium leprae (strain TN) protein is Probable peptidyl-prolyl cis-trans isomerase A (ppiA).